The following is a 359-amino-acid chain: Guanine nucleotide-binding protein alpha-4 subunit (359 aa).

Residue Gly2 is the site of N-myristoyl glycine attachment. Cys3 carries the S-palmitoyl cysteine lipid modification. The G-alpha domain maps to 31–359 (TEVKLLLLGA…RYNLKDCGLF (329 aa)). The G1 motif stretch occupies residues 34–47 (KLLLLGAGESGKST). Residues 39–46 (GAGESGKS), 178–184 (LRARVKS), 203–207 (DVGGQ), 272–275 (NKMD), and Ala331 contribute to the GTP site. Ser46 contacts Mg(2+). The segment at 176 to 184 (DILRARVKS) is G2 motif. The segment at 199–208 (FRMFDVGGQR) is G3 motif. A G4 motif region spans residues 268 to 275 (ILFLNKMD). Residues 329–334 (TCATDT) form a G5 motif region.

This sequence belongs to the G-alpha family. G(i/o/t/z) subfamily. In terms of assembly, g proteins are composed of 3 units; alpha, beta and gamma. The alpha chain contains the guanine nucleotide binding site.

In terms of biological role, guanine nucleotide-binding proteins (G proteins) are involved as modulators or transducers in various transmembrane signaling systems. The protein is Guanine nucleotide-binding protein alpha-4 subunit (gpa-4) of Caenorhabditis briggsae.